A 364-amino-acid chain; its full sequence is Chorismate synthase (364 aa).

Residue Arg47 participates in NADP(+) binding. Residues 125–127 (RAS), Gly288, 303–307 (KPTAT), and Arg329 contribute to the FMN site.

Belongs to the chorismate synthase family. As to quaternary structure, homotetramer. The cofactor is FMNH2.

It catalyses the reaction 5-O-(1-carboxyvinyl)-3-phosphoshikimate = chorismate + phosphate. It participates in metabolic intermediate biosynthesis; chorismate biosynthesis; chorismate from D-erythrose 4-phosphate and phosphoenolpyruvate: step 7/7. Catalyzes the anti-1,4-elimination of the C-3 phosphate and the C-6 proR hydrogen from 5-enolpyruvylshikimate-3-phosphate (EPSP) to yield chorismate, which is the branch point compound that serves as the starting substrate for the three terminal pathways of aromatic amino acid biosynthesis. This reaction introduces a second double bond into the aromatic ring system. The protein is Chorismate synthase of Synechococcus sp. (strain CC9902).